A 1230-amino-acid polypeptide reads, in one-letter code: MDSDNWNFQNNPYFQDYNIGNPNNNTNGINGSSNGTMNLSNSASLFLNKNLGNSDFQPFSLQPSLYLSNSSNNTNNNNNNNNNNNNNNNNNNNNNNNNNNNNNNNIINNNTDEFVFKKISANNLQTPTSPPKDLGFIQTILQHQQELFQKKLSESGVTNLQPDQIQFMFMQEQQKYLTSLNGNDNTLPPLENNFSFQHVNNNNLTSPPQQQQQQQQQQQQQQHQQHQQHQQHQQQQQQQQQQQQQQHQHQQQQQQQQQQQQQQQQQQQQQQLKQQQPQQHPIQSPQPIQSPTPSPSLQQHQTYSYTPSTQQTSLQQLQQQQMQQLLQMSPQHQQQHNQIQQQQAAAAAAALLQQQLAQQQAQQLAQQQQLAQQQLAQQQQQQQQQHVQSLHQAQVQQAHMSQLQQQQLAQQAFQQAQQQQFHQQNIQQHQNQNQQQLQLPQPQQQQHKSTPPTQNTPPVKSPAPQTPTLTTNGKGSKSTPPTTTTTTTTTTSSSSSSSSSSSSSKKKTSNKKTGNLQVPPTPPHHHHHHHNNHHHHHSEGFSDENDEEFIDENEDKSKNKSRSSQNIASRNYRQRKKDHISEVEFKVQQLSLENERLKQENHLLKKGDLGDVMRPDFDFQQVLLESQKLMSQLQDAVNKQDHATIENLLQLYYFASQLRTTVVEREVEKIVHPYTQARLAVMGYRSNAETSILLRPFSTNLWWPKYADEVGLTEEQRKASDILWTDHLKIDMELRTERDQLDREIKELFLKKIVSHGTKRPELLFERETLSTFNSESDYPSSPSSASNSSNSPPTSSPTIITPPDSPLTNNQNNQNNNQMINSNSNNSNNNSHHHHHHHHSHLHGHSPYPVPNGTVHPPPTTAVSEHNKPIELSELLDVTRKLEMLKKNFVKHRNLICDTDLVLSTILTPFQHAKLILRLNSVTCYDFSIVDTITGIWGSINSTLKEGSFIQNLMPDQDGKFEVLEKFKQNQLLDLKGQRPIKLESLQRTYEKLYQTVLGSESPNCQFVKQADYQHQNLLTASPNYTNSPLITSSPSQLTPNSPRPPLDISNNNNNNNNNNNNNNNNNNNNNNNNNNNNNNNNNNNNNNNNNNNNNNSNNNNNTNNNNNNYNNNGNNNNGNNNNGNNNNGNNGNNGNNSNNSNNGNINSVDIQALHQQQKQNLQPQQLQQNQQLQQNQNTPPQQSQQVCSPSSPMTPELNKQPEIVGGDNTNKKNKSKKYQWYSYKTPNI.

Disordered regions lie at residues 65 to 108 (LYLS…NIIN), 180 to 233 (LNGN…QQHQ), 270 to 310 (QQLK…PSTQ), and 422 to 578 (HQQN…RKKD). Low complexity-rich tracts occupy residues 69-108 (NSSNNTNNNNNNNNNNNNNNNNNNNNNNNNNNNNNNNIIN), 192-233 (NNFS…QQHQ), 270-287 (QQLKQQQPQQHPIQSPQP), 295-310 (PSLQQHQTYSYTPSTQ), and 422-447 (HQQNIQQHQNQNQQQLQLPQPQQQQH). Composition is skewed to polar residues over residues 448 to 458 (KSTPPTQNTPP) and 466 to 475 (TPTLTTNGKG). Low complexity predominate over residues 476–503 (SKSTPPTTTTTTTTTTSSSSSSSSSSSS). Residues 523-537 (PHHHHHHHNNHHHHH) show a composition bias toward basic residues. Acidic residues predominate over residues 541–554 (FSDENDEEFIDENE). The 64-residue stretch at 555–618 (DKSKNKSRSS…LGDVMRPDFD (64 aa)) folds into the bZIP domain. The basic motif stretch occupies residues 556–586 (KSKNKSRSSQNIASRNYRQRKKDHISEVEFK). Residues 562–571 (RSSQNIASRN) show a composition bias toward polar residues. A leucine-zipper region spans residues 590-604 (LSLENERLKQENHLL). The stretch at 728–753 (LKIDMELRTERDQLDREIKELFLKKI) forms a coiled coil. Disordered stretches follow at residues 772–869 (TFNS…EHNK) and 1025–1230 (NYTN…TPNI). Composition is skewed to low complexity over residues 774–803 (NSESDYPSSPSSASNSSNSPPTSSPTIITP) and 810–831 (NNQNNQNNNQMINSNSNNSNNN). The span at 832 to 845 (SHHHHHHHHSHLHG) shows a compositional bias: basic residues. Over residues 1025–1042 (NYTNSPLITSSPSQLTPN) the composition is skewed to polar residues. Low complexity-rich tracts occupy residues 1052–1146 (NNNN…NNGN) and 1153–1193 (QALH…SPSS).

It belongs to the bZIP family. Binds DNA as a dimer. Heterodimerizes with dimB; in vitro. Also able to form homodimer; in vitro.

It is found in the nucleus. Transcriptional regulator involved in DIF-1 signaling. DIF-1 (Differentiation Inducing Factor-1) is a signal molecule involved in the differentiation of pstO (prestalk-O) cells. Functions both as an activator of prestalk gene expression and a repressor of prespore gene expression. The chain is Basic-leucine zipper transcription factor A (dimA) from Dictyostelium discoideum (Social amoeba).